The primary structure comprises 158 residues: 2-C-methyl-D-erythritol 2,4-cyclodiphosphate synthase (158 aa).

Residues Asp-9 and His-11 each contribute to the a divalent metal cation site. Residues 9–11 and 35–36 contribute to the 4-CDP-2-C-methyl-D-erythritol 2-phosphate site; these read DVH and HS. His-43 contributes to the a divalent metal cation binding site. Residues 57 to 59, 62 to 66, 101 to 107, 133 to 136, Phe-140, and Arg-143 each bind 4-CDP-2-C-methyl-D-erythritol 2-phosphate; these read DIG, FPDTD, AQAPKMA, and TTTE.

This sequence belongs to the IspF family. Homotrimer. A divalent metal cation serves as cofactor.

The catalysed reaction is 4-CDP-2-C-methyl-D-erythritol 2-phosphate = 2-C-methyl-D-erythritol 2,4-cyclic diphosphate + CMP. Its pathway is isoprenoid biosynthesis; isopentenyl diphosphate biosynthesis via DXP pathway; isopentenyl diphosphate from 1-deoxy-D-xylulose 5-phosphate: step 4/6. Involved in the biosynthesis of isopentenyl diphosphate (IPP) and dimethylallyl diphosphate (DMAPP), two major building blocks of isoprenoid compounds. Catalyzes the conversion of 4-diphosphocytidyl-2-C-methyl-D-erythritol 2-phosphate (CDP-ME2P) to 2-C-methyl-D-erythritol 2,4-cyclodiphosphate (ME-CPP) with a corresponding release of cytidine 5-monophosphate (CMP). This Vibrio vulnificus (strain CMCP6) protein is 2-C-methyl-D-erythritol 2,4-cyclodiphosphate synthase.